A 347-amino-acid chain; its full sequence is Probable replication factor C subunit 3 (347 aa).

The protein belongs to the activator 1 small subunits family. In terms of assembly, heteropentamer of various rfc subunits that forms a complex (RFC) with PCNA in the presence of ATP.

It localises to the nucleus. The elongation of primed DNA templates by DNA polymerase delta and epsilon requires the action of the accessory proteins PCNA and activator 1. The polypeptide is Probable replication factor C subunit 3 (rfc3) (Dictyostelium discoideum (Social amoeba)).